Reading from the N-terminus, the 351-residue chain is Beta-hexosaminidase (351 aa).

Residues aspartate 62, arginine 70, arginine 133, and 163 to 164 (KH) contribute to the substrate site. The active-site Proton donor/acceptor is histidine 176. Aspartate 248 serves as the catalytic Nucleophile.

The protein belongs to the glycosyl hydrolase 3 family. NagZ subfamily. In terms of assembly, monomer.

Its subcellular location is the cytoplasm. The enzyme catalyses Hydrolysis of terminal non-reducing N-acetyl-D-hexosamine residues in N-acetyl-beta-D-hexosaminides.. Its pathway is cell wall biogenesis; peptidoglycan recycling. Plays a role in peptidoglycan recycling by cleaving the terminal beta-1,4-linked N-acetylglucosamine (GlcNAc) from peptide-linked peptidoglycan fragments, giving rise to free GlcNAc, anhydro-N-acetylmuramic acid and anhydro-N-acetylmuramic acid-linked peptides. The polypeptide is Beta-hexosaminidase (Haemophilus influenzae (strain ATCC 51907 / DSM 11121 / KW20 / Rd)).